We begin with the raw amino-acid sequence, 332 residues long: MMKKPVVIGLAVVVLAAVVAGGYWWYQSRQDNGLTLYGNVDIRTVNLSFRVGGRVESLAVDEGDAIKAGQVLGELDHKPYEIALMQAKAGVSVAQAQYDLMLAGYRDEEIAQAAAAVKQAQAAYDYAQNFYNRQQGLWKSRTISANDLENARSSRDQAQATLKSAQDKLRQYRSGNREQDIAQAKASLEQAQAQLAQAELNLQDSTLIAPSDGTLLTRAVEPGTVLNEGGTVFTVSLTRPVWVRAYVDERNLDQAQPGRKVLLYTDGRPNKPYHGQIGFVSPTAEFTPKTVETPDLRTDLVYRLRIVVTDADDALRQGMPVTVQFGDEAGHE.

The N-terminal stretch at 1 to 16 is a signal peptide; it reads MMKKPVVIGLAVVVLA. Residues 108 to 209 are a coiled coil; sequence EEIAQAAAAV…LNLQDSTLIA (102 aa).

Belongs to the UPF0194 family.

The protein localises to the periplasm. The sequence is that of UPF0194 membrane protein YbhG from Escherichia coli O45:K1 (strain S88 / ExPEC).